The following is a 348-amino-acid chain: 3-isopropylmalate dehydrogenase (348 aa).

76–87 (GPKWTDPNNRPE) provides a ligand contact to NAD(+). The substrate site is built by Arg94, Arg104, Arg132, and Asp217. Residues Asp217, Asp241, and Asp245 each coordinate Mg(2+). Residue 275–287 (GSAPDIAGKNVAN) participates in NAD(+) binding.

Belongs to the isocitrate and isopropylmalate dehydrogenases family. LeuB type 1 subfamily. Homodimer. Mg(2+) serves as cofactor. The cofactor is Mn(2+).

The protein resides in the cytoplasm. The catalysed reaction is (2R,3S)-3-isopropylmalate + NAD(+) = 4-methyl-2-oxopentanoate + CO2 + NADH. Its pathway is amino-acid biosynthesis; L-leucine biosynthesis; L-leucine from 3-methyl-2-oxobutanoate: step 3/4. Its function is as follows. Catalyzes the oxidation of 3-carboxy-2-hydroxy-4-methylpentanoate (3-isopropylmalate) to 3-carboxy-4-methyl-2-oxopentanoate. The product decarboxylates to 4-methyl-2 oxopentanoate. The protein is 3-isopropylmalate dehydrogenase of Staphylococcus aureus (strain COL).